We begin with the raw amino-acid sequence, 1487 residues long: MKKNREAQLCLFSALLAFLPFASLLNGNSKYMVLVPSQLYTETPEKICLHLYHLNETVTVTASLISQRGTRKLFDELVVDKDLFHCLSFTIPRLPSSEEEESLDINIEGAKHKFSERRVVLVKNKESVVFVQTDKPVYKPGQSVKFRVVSMDKNLHPLNELFPLAYIEDPKMNRIMQWQDIKTENGLKQLSFSLSAEPIQGPYKIVILKQSGVKEEHSFTVMEFVLPRFGVDVKVPNAISVYDEIINVTACAIYTYGKPVPGHVKISLCHGNPSFSSETKSACKEEDSELDNNGCSTQEVNITEFQLKENYLKMHQAFHVNATVTEEGTGSEFSGSGRIEVERTRNKFLFLKADSHFRHGIPFFVKIRLVDIKGDPIPNEQVFIKAQEAGYTNATTTDQHGLAKFSIDTSSISGYSLNIKVYHKEESSCIHSSCTAERHAEEHHTAYAVYSLSKSYIYLDTEAGVLPCNQIHTVQAHFILKGQVLGVLPQIVFHYLVMAQGSILQTGNHTHQVEPGVSQVQGNFALEIPVEFSMVPVAKMLIYTILPDGEVIADSVTFQVEKCLRNKVHLSFSPSQSLPASQTHMRVTASPQSLCGLRAVDQSVLLLKPEAELSPSLIYDLPGMQDSNFIPSSYHPFEDEYDCLMYQPRDTEELTYSVPYGREKDVYRYVRDMGLTAFTNLKIKHPTYCYEMNMVVLSAPAVESELSPRGGEFEMMPLGVNKSPLPKEPPRKDPPPKDPVIETIRNYFPETWIWDLVTVNSSGVTEVEMTVPDTITEWKAGALCLSNDTGLGLSSVATLQAFQPFFVELTMPYSVIRGEAFMLKATVMNYLPTSLPMAVQLEASPDFTAVPVGNDQDSYCLGANGRHTSSWLVTPKSLGNVNFSVSVEAQQSPELCGSQVATVPETGRKDTVVKVLIVEPEGIKKEHTFSSLLCASDAELSETLSLLLPPTVVKDSARAHFSVMGDILSSAIKNTQNLIQMPYGCGEQNMVLFAPNIYVLKYLNETQQLTEKIKSKALGYLRAGYQRELNYKHKDGSYSAFGDHNGQGQGNTWLTAFVLKSFAQARAFIFIDESHITDAFTWLSKQQKDSGCFRSSGSLFNNAMKGGVDDEITLSAYITMALLESSLPDTDPVVSKALGCLEASWETIEQGRNGSFVYTKTLMAYAFALAGNQEKRNEILKSLDKEAIREDNSIHWERPQKPTKSEGYLYTPQASSAEVEMSAYVVLARLTAQPAPSPEDLALSMGTIKWLTKQQNSHGGFSSTQDTVVALDALSKYGAATFSKSQKTPLVTIQSSGSFSQKFQVDNSNRLLLQQVSLPDIPGNYTVSVSGEGCVYAQTTLRYNMPLEKQQPAFALKVQTVPLTCNNPKGQNSFQISLEISYTGSRPASNMVIADVKMLSGFIPLKPTVKKLERLEHVSRTEVTTNNVLLYLDQVTNQTLSFSFIIQQDIPVKNLQPAIVKVYDYYETDEVAFAEYSSPCSSDKQNV.

The first 24 residues, 1–24, serve as a signal peptide directing secretion; that stretch reads MKKNREAQLCLFSALLAFLPFASL. A disulfide bond links Cys-48 and Cys-86. 2 N-linked (GlcNAc...) asparagine glycosylation sites follow: Asn-55 and Asn-247. 2 disulfide bridges follow: Cys-251–Cys-283 and Cys-269–Cys-295. Residues Asn-301, Asn-321, Asn-393, and Asn-508 are each glycosylated (N-linked (GlcNAc...) asparagine). Intrachain disulfides connect Cys-468/Cys-563, Cys-595/Cys-784, and Cys-643/Cys-689. Residues 686–745 form a bait region region; the sequence is PTYCYEMNMVVLSAPAVESELSPRGGEFEMMPLGVNKSPLPKEPPRKDPPPKDPVIETIR. Residues Asn-760, Asn-787, and Asn-882 are each glycosylated (N-linked (GlcNAc...) asparagine). 4 cysteine pairs are disulfide-bonded: Cys-860–Cys-896, Cys-934–Cys-1334, Cys-1092–Cys-1140, and Cys-1365–Cys-1480. A cross-link (isoglutamyl cysteine thioester (Cys-Gln)) is located at residues 985–988; that stretch reads CGEQ. Residue Asn-1004 is glycosylated (N-linked (GlcNAc...) asparagine). N-linked (GlcNAc...) asparagine glycosylation is found at Asn-1153, Asn-1324, and Asn-1437.

The protein belongs to the protease inhibitor I39 (alpha-2-macroglobulin) family. Monomer. Plasma.

The protein resides in the secreted. Its function is as follows. A proteinase activates the inhibitor by specific proteolysis in the bait region, which, by an unknown mechanism leads to reaction at the cysteinyl-glutamyl internal thiol ester site and to a conformational change, whereby the proteinase is trapped and/or covalently bound to the inhibitor. While in the tetrameric proteinase inhibitors steric inhibition is sufficiently strong, monomeric forms need a covalent linkage between the activated glutamyl residue of the original thiol ester and a terminal amino group of a lysine or another nucleophilic group on the proteinase, for inhibition to be effective. The polypeptide is Murinoglobulin-1 (Rattus norvegicus (Rat)).